Reading from the N-terminus, the 676-residue chain is MGRRKIEIQRISDDRNRAVTFIKRKAGLFKKAHELSVLCQVDIAVIILGSNNTFYEFSSVDTNDLIYHYQNDKNLLHEVKDPSDYGDFHKSASVNINQDLLRSSMSNKPSKSNVKGMNQSENDDDENNDEDDDDHGNFERNSNMHSNKKASDKNIPSAHMKLLSPTALISKMDGSEQNKRHPENALPPLQHLKRLKPDPLQISRTPQQQQQQNISRPYHSSMYNLNQPSSSSSSPSTMDFPKLPSFQNSSFNGRPPPISISPNKFSKPFTNASSRTPKQEHKINNSGSNNNDNSNYTQSPSNSLEDSIQQTVKARRKLSARPVLRVRIPNNNFSSNSAIPSEPSSASSTSANGNSMGSSQIMKENKTSRSSKISPLSASASGPLTLQKGNNGRMVIKLPNANAPNGSNNGNGSNNNNHPYPFGSGSSPLFSATQPYIATPLQPSNIPGGPFQQNTSFLAQRQTQQYQQMSFKKQSQTVPLTTTLTGRPPSTFSGPETSNGPPTGSLPSKFVHDLMSNSPNVSSISMFPDWSMGPNSAKPGNTNNPGTFPPVQTAVNNGNSSNISSTNNTNNNNNNNNNNSSNNNSNNGNDNNSNNSNNSYYSNNEDAPVNGAAISEHTTDGDSNNQSNSSTYDAAATAYNGNTGLTPYINTAQTPLGTKFFNFSTDISGEKNSSKI.

In terms of domain architecture, MADS-box spans arginine 3–phenylalanine 57. The segment at residues serine 58–aspartate 87 is a DNA-binding region (mef2-type). A compositionally biased stretch (polar residues) spans serine 103–serine 120. The segment at serine 103–proline 156 is disordered. Residue serine 120 is modified to Phosphoserine. Residues glutamate 121–aspartate 134 show a composition bias toward acidic residues. Position 164 is a phosphoserine (serine 164). Residues aspartate 173 to glutamate 183 show a composition bias toward basic and acidic residues. Disordered stretches follow at residues aspartate 173–leucine 192, isoleucine 202–leucine 318, asparagine 330–serine 424, lysine 472–leucine 514, and methionine 532–threonine 631. The span at isoleucine 260 to threonine 276 shows a compositional bias: polar residues. Over residues asparagine 284–asparagine 295 the composition is skewed to low complexity. A compositionally biased stretch (polar residues) spans tyrosine 296–valine 312. Low complexity-rich tracts occupy residues serine 334 to serine 359, serine 368 to serine 381, and proline 399 to asparagine 417. A phosphoserine mark is found at serine 374 and serine 377. Over residues lysine 472 to leucine 506 the composition is skewed to polar residues. A compositionally biased stretch (low complexity) spans proline 539–asparagine 604. A compositionally biased stretch (polar residues) spans glycine 621–threonine 631.

This sequence belongs to the MEF2 family. In terms of assembly, can heterodimerize with SPM1. Interacts with KDX1 and SLT2. In terms of processing, phosphorylated by SLT2.

The protein resides in the nucleus. Functionally, may function as a transcription factor downstream of MPK1 that is subject to activation by the MPK1 mitogen-activated protein kinase pathway. Binds to the DNA sequence 5'-CTA[TA](4)TAG-3'. At least some RML1 target genes are involved in cell wall biosynthesis. The protein is Transcription factor RLM1 (RLM1) of Saccharomyces cerevisiae (strain ATCC 204508 / S288c) (Baker's yeast).